Here is a 233-residue protein sequence, read N- to C-terminus: Small ribosomal subunit protein uS3 (233 aa).

Residues Glu28 to Gly96 enclose the KH type-2 domain.

This sequence belongs to the universal ribosomal protein uS3 family. Part of the 30S ribosomal subunit. Forms a tight complex with proteins S10 and S14.

In terms of biological role, binds the lower part of the 30S subunit head. Binds mRNA in the 70S ribosome, positioning it for translation. The sequence is that of Small ribosomal subunit protein uS3 from Shigella flexneri.